The following is a 307-amino-acid chain: UDP-N-acetylenolpyruvoylglucosamine reductase (307 aa).

One can recognise an FAD-binding PCMH-type domain in the interval 33–198 (KVGGPVDILV…LEAILKLSLG (166 aa)). The active site involves Arg177. The active-site Proton donor is the Ser227. The active site involves Glu297.

Belongs to the MurB family. The cofactor is FAD.

Its subcellular location is the cytoplasm. The catalysed reaction is UDP-N-acetyl-alpha-D-muramate + NADP(+) = UDP-N-acetyl-3-O-(1-carboxyvinyl)-alpha-D-glucosamine + NADPH + H(+). Its pathway is cell wall biogenesis; peptidoglycan biosynthesis. Cell wall formation. The polypeptide is UDP-N-acetylenolpyruvoylglucosamine reductase (Clostridium tetani (strain Massachusetts / E88)).